Consider the following 539-residue polypeptide: Eukaryotic translation initiation factor 3 subunit L (539 aa).

The PCI domain maps to 306–514 (TFSDILLYIQ…IHIADTKVSH (209 aa)).

Belongs to the eIF-3 subunit L family. As to quaternary structure, component of the eukaryotic translation initiation factor 3 (eIF-3) complex. The eIF-3 complex interacts with pix.

Its subcellular location is the cytoplasm. Functionally, component of the eukaryotic translation initiation factor 3 (eIF-3) complex, which is involved in protein synthesis of a specialized repertoire of mRNAs and, together with other initiation factors, stimulates binding of mRNA and methionyl-tRNAi to the 40S ribosome. The eIF-3 complex specifically targets and initiates translation of a subset of mRNAs involved in cell proliferation. The sequence is that of Eukaryotic translation initiation factor 3 subunit L from Drosophila melanogaster (Fruit fly).